The following is a 171-amino-acid chain: NADH-quinone oxidoreductase subunit I (171 aa).

4Fe-4S ferredoxin-type domains are found at residues 63 to 92 (RRYE…IESD) and 102 to 131 (TRYD…ETQI). [4Fe-4S] cluster is bound by residues Cys-72, Cys-75, Cys-78, Cys-82, Cys-111, Cys-114, Cys-117, and Cys-121.

The protein belongs to the complex I 23 kDa subunit family. NDH-1 is composed of 14 different subunits. Subunits NuoA, H, J, K, L, M, N constitute the membrane sector of the complex. Requires [4Fe-4S] cluster as cofactor.

The protein localises to the cell inner membrane. The enzyme catalyses a quinone + NADH + 5 H(+)(in) = a quinol + NAD(+) + 4 H(+)(out). Functionally, NDH-1 shuttles electrons from NADH, via FMN and iron-sulfur (Fe-S) centers, to quinones in the respiratory chain. The immediate electron acceptor for the enzyme in this species is believed to be ubiquinone. Couples the redox reaction to proton translocation (for every two electrons transferred, four hydrogen ions are translocated across the cytoplasmic membrane), and thus conserves the redox energy in a proton gradient. This Paracidovorax citrulli (strain AAC00-1) (Acidovorax citrulli) protein is NADH-quinone oxidoreductase subunit I.